Here is a 276-residue protein sequence, read N- to C-terminus: Large ribosomal subunit protein uL2 (276 aa).

Residues 224–276 (AMNPIDHPHGGGEGKTSGGRNPVTPWGVPTKGKKTRKRNKSSNKYIKRVSDKG) are disordered. Positions 254 to 270 (KGKKTRKRNKSSNKYIK) are enriched in basic residues.

It belongs to the universal ribosomal protein uL2 family. Part of the 50S ribosomal subunit. Forms a bridge to the 30S subunit in the 70S ribosome.

One of the primary rRNA binding proteins. Required for association of the 30S and 50S subunits to form the 70S ribosome, for tRNA binding and peptide bond formation. It has been suggested to have peptidyltransferase activity; this is somewhat controversial. Makes several contacts with the 16S rRNA in the 70S ribosome. This chain is Large ribosomal subunit protein uL2, found in Ehrlichia canis (strain Jake).